The primary structure comprises 859 residues: Leucine--tRNA ligase (859 aa).

Residues 42–52 (PYPSGRLHMGH) carry the 'HIGH' region motif. The short motif at 618–622 (KMSKS) is the 'KMSKS' region element. K621 provides a ligand contact to ATP.

It belongs to the class-I aminoacyl-tRNA synthetase family.

It is found in the cytoplasm. It catalyses the reaction tRNA(Leu) + L-leucine + ATP = L-leucyl-tRNA(Leu) + AMP + diphosphate. The polypeptide is Leucine--tRNA ligase (Shewanella amazonensis (strain ATCC BAA-1098 / SB2B)).